Reading from the N-terminus, the 204-residue chain is Small ribosomal subunit protein uS4 (204 aa).

The S4 RNA-binding domain occupies 92-153 (RRLDALVLRS…RSKEKTLFTI (62 aa)).

It belongs to the universal ribosomal protein uS4 family. In terms of assembly, part of the 30S ribosomal subunit. Contacts protein S5. The interaction surface between S4 and S5 is involved in control of translational fidelity.

In terms of biological role, one of the primary rRNA binding proteins, it binds directly to 16S rRNA where it nucleates assembly of the body of the 30S subunit. With S5 and S12 plays an important role in translational accuracy. In Streptomyces coelicolor (strain ATCC BAA-471 / A3(2) / M145), this protein is Small ribosomal subunit protein uS4.